Here is a 247-residue protein sequence, read N- to C-terminus: Probable transcriptional regulatory protein lpp1249 (247 aa).

The protein belongs to the TACO1 family.

Its subcellular location is the cytoplasm. The sequence is that of Probable transcriptional regulatory protein lpp1249 from Legionella pneumophila (strain Paris).